A 398-amino-acid chain; its full sequence is G2/mitotic-specific cyclin-B2 (398 aa).

T8 bears the Phosphothreonine mark. Residues S11, S77, and S92 each carry the phosphoserine modification. A Phosphothreonine modification is found at T94. A phosphoserine mark is found at S99, S392, and S398.

The protein belongs to the cyclin family. Cyclin AB subfamily. Interacts with the CDK1 protein kinase to form a serine/threonine kinase holoenzyme complex also known as maturation promoting factor (MPF). The cyclin subunit imparts substrate specificity to the complex.

In terms of biological role, essential for the control of the cell cycle at the G2/M (mitosis) transition. The protein is G2/mitotic-specific cyclin-B2 (CCNB2) of Macaca fascicularis (Crab-eating macaque).